The chain runs to 232 residues: 2,3,4,5-tetrahydropyridine-2,6-dicarboxylate N-acetyltransferase (232 aa).

The protein belongs to the transferase hexapeptide repeat family. DapH subfamily.

It catalyses the reaction (S)-2,3,4,5-tetrahydrodipicolinate + acetyl-CoA + H2O = L-2-acetamido-6-oxoheptanedioate + CoA. Its pathway is amino-acid biosynthesis; L-lysine biosynthesis via DAP pathway; LL-2,6-diaminopimelate from (S)-tetrahydrodipicolinate (acetylase route): step 1/3. Its function is as follows. Catalyzes the transfer of an acetyl group from acetyl-CoA to tetrahydrodipicolinate. In Kosmotoga olearia (strain ATCC BAA-1733 / DSM 21960 / TBF 19.5.1), this protein is 2,3,4,5-tetrahydropyridine-2,6-dicarboxylate N-acetyltransferase.